A 310-amino-acid polypeptide reads, in one-letter code: UPF0324 membrane protein VP0936 (310 aa).

The next 10 membrane-spanning stretches (helical) occupy residues 7–29 (PFGLALLFCLTPFVSSPIALVIG), 44–63 (IASFTKKLLSYSIIGLGFGI), 75–94 (GIGLIIATIVGTLVIGSLIA), 104–126 (AYLISSGTAICGGSAIAAVAPAI), 133–155 (IGLALATVFVLNSLALFIFPVIG), 165–187 (FGTWAAIAIHDTSSVVGAASAYG), 199–218 (LARALWIIPVALISAVIFSR), 228–250 (LVIPYFIFWYCAAIAFSDFFPQL), 257–279 (IFTIAKQALVVCLFLIGCSISIS), and 289–308 (LLFGVTLWVLISTTSLSWLV).

Belongs to the UPF0324 family.

The protein localises to the cell membrane. The polypeptide is UPF0324 membrane protein VP0936 (Vibrio parahaemolyticus serotype O3:K6 (strain RIMD 2210633)).